Here is a 451-residue protein sequence, read N- to C-terminus: Secreted RxLR effector protein 70 (451 aa).

Positions 1 to 17 (MRGAYYIITALLVVASS) are cleaved as a signal peptide. The short motif at 48–65 (RFLRESRDVHDDLANEER) is the RxLR-dEER element. The disordered stretch occupies residues 303-336 (DAPSNSKHTLGGNKDSSSATTLHKHSKGLSSRPF). The span at 305 to 323 (PSNSKHTLGGNKDSSSATT) shows a compositional bias: polar residues.

This sequence belongs to the RxLR effector family.

The protein resides in the secreted. Its subcellular location is the host nucleus. In terms of biological role, secreted effector that completely suppresses the host cell death induced by cell death-inducing proteins. This is Secreted RxLR effector protein 70 from Plasmopara viticola (Downy mildew of grapevine).